Consider the following 226-residue polypeptide: Protein GrpE (226 aa).

2 disordered regions span residues 1-24 (MADE…PRDR) and 205-226 (GVSK…EDNA). The span at 217–226 (NGASTSEDNA) shows a compositional bias: polar residues.

It belongs to the GrpE family. Homodimer.

The protein localises to the cytoplasm. Functionally, participates actively in the response to hyperosmotic and heat shock by preventing the aggregation of stress-denatured proteins, in association with DnaK and GrpE. It is the nucleotide exchange factor for DnaK and may function as a thermosensor. Unfolded proteins bind initially to DnaJ; upon interaction with the DnaJ-bound protein, DnaK hydrolyzes its bound ATP, resulting in the formation of a stable complex. GrpE releases ADP from DnaK; ATP binding to DnaK triggers the release of the substrate protein, thus completing the reaction cycle. Several rounds of ATP-dependent interactions between DnaJ, DnaK and GrpE are required for fully efficient folding. The sequence is that of Protein GrpE from Brucella melitensis biotype 1 (strain ATCC 23456 / CCUG 17765 / NCTC 10094 / 16M).